The sequence spans 286 residues: Alpha-ketoglutarate-dependent dioxygenase alkB homolog 3 (286 aa).

A disordered region spans residues 1 to 46; it reads MEDKRQRARVQGGWATPTKSQSATQPASPARSRLSQTAGPAWRSKE. The segment covering 17–38 has biased composition (polar residues); it reads PTKSQSATQPASPARSRLSQTA. Substrate-binding positions include Trp115 and 141–143; that span reads YTY. A Fe2OG dioxygenase domain is found at 172–278; sequence TFNSLLCNFY…RVNLTFRTVY (107 aa). Leu177 carries the (4R)-5-hydroxyleucine; alternate modification. Leu177 carries the post-translational modification (4R)-5-oxoleucine; alternate. Position 179–181 (179–181) interacts with 2-oxoglutarate; that stretch reads NFY. His191 and Asp193 together coordinate Fe cation. Residue Asp194 coordinates substrate. Position 257 (His257) interacts with Fe cation. 2-oxoglutarate contacts are provided by residues 269–275 and Arg275; that span reads RVNLTFR.

Belongs to the alkB family. As to quaternary structure, interacts with the ASCC complex composed of ASCC1, ASCC2 and ASCC3. Interacts directly with ASCC3, and is thereby recruited to the ASCC complex. Interacts with OTUD4; the interaction is direct. Interacts with USP7 and USP9X. The cofactor is Fe(2+). Ubiquitinated; undergoes 'Lys-48'-linked polyubiquitination. OTUD4 promotes USP7 and USP9X-dependent deubiquitination of 'Lys-48'-polyubiquitinated ALKBH3 promoting the repair of alkylated DNA lesions. As to expression, detected in testis, kidney, liver and heart.

The protein localises to the nucleus. Its subcellular location is the cytoplasm. It carries out the reaction an N(1)-methyladenosine in mRNA + 2-oxoglutarate + O2 = an adenosine in mRNA + formaldehyde + succinate + CO2. The catalysed reaction is a methylated nucleobase within DNA + 2-oxoglutarate + O2 = a nucleobase within DNA + formaldehyde + succinate + CO2. The enzyme catalyses an N(1)-methyl-2'-deoxyadenosine in single-stranded DNA + 2-oxoglutarate + O2 = a 2'-deoxyadenosine in single-stranded DNA + formaldehyde + succinate + CO2 + H(+). It catalyses the reaction an N(3)-methyl-2'-deoxycytidine in single-stranded DNA + 2-oxoglutarate + O2 = a 2'-deoxycytidine in single-stranded DNA + formaldehyde + succinate + CO2 + H(+). It carries out the reaction a 3,N(4)-etheno-2'-deoxycytidine in single-stranded DNA + 2-oxoglutarate + O2 + H2O = a 2'-deoxycytidine in single-stranded DNA + glyoxal + succinate + CO2. Its activity is regulated as follows. Activated by ascorbate. Functionally, dioxygenase that mediates demethylation of DNA and RNA containing 1-methyladenosine (m1A). Repairs alkylated DNA containing 1-methyladenosine (m1A) and 3-methylcytosine (m3C) by oxidative demethylation. Has a strong preference for single-stranded DNA. Able to process alkylated m3C within double-stranded regions via its interaction with ASCC3, which promotes DNA unwinding to generate single-stranded substrate needed for ALKBH3. Can repair exocyclic 3,N4-ethenocytosine adducs in single-stranded DNA. Also acts on RNA. Demethylates N(1)-methyladenosine (m1A) RNA, an epigenetic internal modification of messenger RNAs (mRNAs) highly enriched within 5'-untranslated regions (UTRs) and in the vicinity of start codons. Requires molecular oxygen, alpha-ketoglutarate and iron. The sequence is that of Alpha-ketoglutarate-dependent dioxygenase alkB homolog 3 from Mus musculus (Mouse).